The sequence spans 120 residues: Large ribosomal subunit protein uL18 (120 aa).

Positions 1–22 (MKVDRKTATHRRHQRIRRKIAG) are disordered. A compositionally biased stretch (basic residues) spans 8–20 (ATHRRHQRIRRKI).

It belongs to the universal ribosomal protein uL18 family. In terms of assembly, part of the 50S ribosomal subunit; part of the 5S rRNA/L5/L18/L25 subcomplex. Contacts the 5S and 23S rRNAs.

Its function is as follows. This is one of the proteins that bind and probably mediate the attachment of the 5S RNA into the large ribosomal subunit, where it forms part of the central protuberance. This chain is Large ribosomal subunit protein uL18, found in Gloeobacter violaceus (strain ATCC 29082 / PCC 7421).